The following is a 64-amino-acid chain: MKYTEIKEKSLQELEGLLKEKKLELFGLRMKLKTMQLQDTSAIRKTRKDIARIKTAIAEKRRAG.

It belongs to the universal ribosomal protein uL29 family.

In Nitratiruptor sp. (strain SB155-2), this protein is Large ribosomal subunit protein uL29.